The primary structure comprises 490 residues: Glutamate--tRNA ligase (490 aa).

Residues 15–25 (PSPTGYLHVGG) carry the 'HIGH' region motif. The 'KMSKS' region motif lies at 259–263 (KLSKR). Lysine 262 is an ATP binding site.

This sequence belongs to the class-I aminoacyl-tRNA synthetase family. Glutamate--tRNA ligase type 1 subfamily. In terms of assembly, monomer.

The protein localises to the cytoplasm. It carries out the reaction tRNA(Glu) + L-glutamate + ATP = L-glutamyl-tRNA(Glu) + AMP + diphosphate. Functionally, catalyzes the attachment of glutamate to tRNA(Glu) in a two-step reaction: glutamate is first activated by ATP to form Glu-AMP and then transferred to the acceptor end of tRNA(Glu). This is Glutamate--tRNA ligase from Bdellovibrio bacteriovorus (strain ATCC 15356 / DSM 50701 / NCIMB 9529 / HD100).